We begin with the raw amino-acid sequence, 400 residues long: CCA-adding enzyme (400 aa).

ATP contacts are provided by glycine 8 and arginine 11. CTP-binding residues include glycine 8 and arginine 11. Positions 21 and 23 each coordinate Mg(2+). Residues arginine 91, arginine 137, and arginine 140 each coordinate ATP. 3 residues coordinate CTP: arginine 91, arginine 137, and arginine 140. In terms of domain architecture, HD spans 217–322 (NFQYAMTALK…IDLFNKWDVW (106 aa)).

It belongs to the tRNA nucleotidyltransferase/poly(A) polymerase family. Bacterial CCA-adding enzyme type 2 subfamily. Mg(2+) serves as cofactor.

The catalysed reaction is a tRNA precursor + 2 CTP + ATP = a tRNA with a 3' CCA end + 3 diphosphate. It carries out the reaction a tRNA with a 3' CCA end + 2 CTP + ATP = a tRNA with a 3' CCACCA end + 3 diphosphate. Catalyzes the addition and repair of the essential 3'-terminal CCA sequence in tRNAs without using a nucleic acid template. Adds these three nucleotides in the order of C, C, and A to the tRNA nucleotide-73, using CTP and ATP as substrates and producing inorganic pyrophosphate. tRNA 3'-terminal CCA addition is required both for tRNA processing and repair. Also involved in tRNA surveillance by mediating tandem CCA addition to generate a CCACCA at the 3' terminus of unstable tRNAs. While stable tRNAs receive only 3'-terminal CCA, unstable tRNAs are marked with CCACCA and rapidly degraded. This Actinobacillus succinogenes (strain ATCC 55618 / DSM 22257 / CCUG 43843 / 130Z) protein is CCA-adding enzyme.